The following is a 67-amino-acid chain: Conotoxin Cl6.6b (67 aa).

The N-terminal stretch at 1–24 is a signal peptide; the sequence is MKLTCVLIAAVLLLAVCQLDSADA. Positions 25-37 are excised as a propeptide; that stretch reads TGYMRKNPSLRSP. Disulfide bonds link Cys-43-Cys-57, Cys-50-Cys-61, and Cys-56-Cys-65.

This sequence belongs to the conotoxin O1 superfamily. Expressed by the venom duct.

The protein resides in the secreted. The chain is Conotoxin Cl6.6b from Californiconus californicus (California cone).